The sequence spans 488 residues: Cobyric acid synthase (488 aa).

A GATase cobBQ-type domain is found at 250-438 (DITIAIIRLP…LHGIFDNGSW (189 aa)). Cys-331 functions as the Nucleophile in the catalytic mechanism. Residue His-430 is part of the active site.

This sequence belongs to the CobB/CobQ family. CobQ subfamily.

It functions in the pathway cofactor biosynthesis; adenosylcobalamin biosynthesis. Its function is as follows. Catalyzes amidations at positions B, D, E, and G on adenosylcobyrinic A,C-diamide. NH(2) groups are provided by glutamine, and one molecule of ATP is hydrogenolyzed for each amidation. This chain is Cobyric acid synthase, found in Trichodesmium erythraeum (strain IMS101).